The following is a 546-amino-acid chain: Probable protein kinase UbiB (546 aa).

In terms of domain architecture, Protein kinase spans 123–501 (DFDETPLASA…SRRQGQARYL (379 aa)). ATP contacts are provided by residues 129-137 (LASASIAQV) and Lys152. Catalysis depends on Asp287, which acts as the Proton acceptor. A run of 2 helical transmembrane segments spans residues 496–516 (GQARYLLGVGASLLLVGVFLL) and 521–541 (HIEWGQISLAGAGLCWLLGWF).

It belongs to the ABC1 family. UbiB subfamily.

The protein localises to the cell inner membrane. It functions in the pathway cofactor biosynthesis; ubiquinone biosynthesis [regulation]. Its function is as follows. Is probably a protein kinase regulator of UbiI activity which is involved in aerobic coenzyme Q (ubiquinone) biosynthesis. The protein is Probable protein kinase UbiB of Aeromonas salmonicida (strain A449).